The primary structure comprises 376 residues: dTDP-4-amino-4,6-dideoxygalactose transaminase (376 aa).

The residue at position 181 (lysine 181) is an N6-(pyridoxal phosphate)lysine.

Belongs to the DegT/DnrJ/EryC1 family. Homotetramer. It depends on pyridoxal 5'-phosphate as a cofactor.

It catalyses the reaction dTDP-4-amino-4,6-dideoxy-alpha-D-galactose + 2-oxoglutarate = dTDP-4-dehydro-6-deoxy-alpha-D-glucose + L-glutamate. Its pathway is bacterial outer membrane biogenesis; enterobacterial common antigen biosynthesis. Its function is as follows. Catalyzes the synthesis of dTDP-4-amino-4,6-dideoxy-D-galactose (dTDP-Fuc4N) from dTDP-4-keto-6-deoxy-D-glucose (dTDP-D-Glc4O) and L-glutamate. This Escherichia coli (strain K12) protein is dTDP-4-amino-4,6-dideoxygalactose transaminase.